We begin with the raw amino-acid sequence, 253 residues long: Tetraspanin-11 (253 aa).

The next 3 helical transmembrane spans lie at 19–39, 63–83, and 93–113; these read LLFIFNFFFWVGGAAVMAVGI, ILIFVGGLVMTTGFLGFGAII, and YFCLLLVIFLVELVAGVLAHV. N127 carries an N-linked (GlcNAc...) asparagine glycan. A helical membrane pass occupies residues 220–240; sequence LLLMGAVGIGVACLQICGMVL.

The protein belongs to the tetraspanin (TM4SF) family.

It localises to the membrane. This chain is Tetraspanin-11 (Tspan11), found in Mus musculus (Mouse).